We begin with the raw amino-acid sequence, 379 residues long: Alanine racemase (379 aa).

Lys41 serves as the catalytic Proton acceptor; specific for D-alanine. At Lys41 the chain carries N6-(pyridoxal phosphate)lysine. A substrate-binding site is contributed by Arg138. Tyr260 (proton acceptor; specific for L-alanine) is an active-site residue. Residue Met319 participates in substrate binding.

Belongs to the alanine racemase family. Pyridoxal 5'-phosphate is required as a cofactor.

It catalyses the reaction L-alanine = D-alanine. Its pathway is amino-acid biosynthesis; D-alanine biosynthesis; D-alanine from L-alanine: step 1/1. Catalyzes the interconversion of L-alanine and D-alanine. May also act on other amino acids. The polypeptide is Alanine racemase (alr) (Rhizobium meliloti (strain 1021) (Ensifer meliloti)).